We begin with the raw amino-acid sequence, 233 residues long: Protein Mis18-alpha (233 aa).

Residues S36, S39, and S40 each carry the phosphoserine modification. The 99-residue stretch at 80 to 178 (PLVFLCSGCR…SVEAIESYVL (99 aa)) folds into the Mis18 domain. Zn(2+) contacts are provided by C85, C88, C141, and C144. A Glycyl lysine isopeptide (Lys-Gly) (interchain with G-Cter in SUMO2) cross-link involves residue K162. S233 carries the phosphoserine modification.

It belongs to the mis18 family. In terms of assembly, homodimer, and heterodimer with OIP5/MIS18B. Identified in a complex containing MIS18A, OIP5/MIS18B, MIS18BP1, RBBP7 and RBBP4. Detected in testis.

Its subcellular location is the nucleus. It is found in the chromosome. The protein localises to the centromere. Functionally, required for recruitment of CENPA to centromeres and normal chromosome segregation during mitosis. This Homo sapiens (Human) protein is Protein Mis18-alpha (MIS18A).